The chain runs to 219 residues: Neurotrophic factor BDNF precursor form (219 aa).

An N-terminal signal peptide occupies residues Ser1–Ala5. The propeptide occupies Ala6–Arg114. Asn107 carries N-linked (GlcNAc...) asparagine glycosylation. Cys127 and Cys194 are disulfide-bonded.

This sequence belongs to the NGF-beta family.

It localises to the secreted. Its function is as follows. Promotes the survival of neuronal populations that are all located either in the central nervous system or directly connected to it. The chain is Neurotrophic factor BDNF precursor form (BDNF) from Loxocemus bicolor (Mexican burrowing python).